The chain runs to 429 residues: MQKLVAIKGMNDILPPDSARWEWLEDKVRTLMARYAYRNIRTPIVEPTPLFVRGLGEVTDIVEKEMYSFEDRLNGEQLTLRPEATAGVVRAVVEHSMLYDGGKRLYYMGPMFRHERPQRGRYRQFHQIGAEALGFPGAEADAEIILLAHALWAELGLENVRLELNSLGQPDERRAHRAALIAYLEQHMDVLDEDARRRLHSNPLRILDTKNPAMQALVEGAPRLIDFLGEASLQHFETVKAILDANGVAWSLNPRLVRGMDYYNLTVFEFVTDQLGSQGTICGGGRYDYLIEQIGGKFAPAVGWALGVERVLELLKEQETQVARPAADAYAVVPDASALPVVMAALQRLRAQGVSVQMHSPTAAGEGMGSMKSQFKKADASGARYALVFGADELARGAVTVKPLRDSGEQAERPLAALAEWAATLQSSR.

The protein belongs to the class-II aminoacyl-tRNA synthetase family. As to quaternary structure, homodimer.

The protein localises to the cytoplasm. The catalysed reaction is tRNA(His) + L-histidine + ATP = L-histidyl-tRNA(His) + AMP + diphosphate + H(+). The protein is Histidine--tRNA ligase of Acidovorax ebreus (strain TPSY) (Diaphorobacter sp. (strain TPSY)).